The following is a 345-amino-acid chain: Tetraacyldisaccharide 4'-kinase (345 aa).

61-68 (TAGGTGKT) is a binding site for ATP.

It belongs to the LpxK family.

It catalyses the reaction a lipid A disaccharide + ATP = a lipid IVA + ADP + H(+). The protein operates within glycolipid biosynthesis; lipid IV(A) biosynthesis; lipid IV(A) from (3R)-3-hydroxytetradecanoyl-[acyl-carrier-protein] and UDP-N-acetyl-alpha-D-glucosamine: step 6/6. Transfers the gamma-phosphate of ATP to the 4'-position of a tetraacyldisaccharide 1-phosphate intermediate (termed DS-1-P) to form tetraacyldisaccharide 1,4'-bis-phosphate (lipid IVA). The chain is Tetraacyldisaccharide 4'-kinase from Xanthomonas euvesicatoria pv. vesicatoria (strain 85-10) (Xanthomonas campestris pv. vesicatoria).